Consider the following 237-residue polypeptide: MNDIKYKRIMLKLSGEALAGENGYGLDFKVVKRISKEIKELVDMGVEIGAVVGGGNIWRGRNGEDMDRTTADYMGMLATCINAMALQDSLEQLGVDTRVQTAIEMKEVAEPFIRRRAMRHLEKGRVVIFAAGTGNPYFSTDTTAALRAAEIEADIILLAKKVDGVYDKDPHKHEKAQKFETLTYIDVLDQGLQVMDSTATSLCMDNNIPILVFALDAPGNIRKAISGEKIGTIVCKE.

12–15 (KLSG) serves as a coordination point for ATP. Positions 20-25 (GENGYG) are involved in allosteric activation by GTP. Gly-54 contributes to the UMP binding site. Positions 55 and 59 each coordinate ATP. UMP contacts are provided by residues Asp-72 and 133-140 (TGNPYFST). Residues Tyr-166 and Asp-169 each contribute to the ATP site.

It belongs to the UMP kinase family. As to quaternary structure, homohexamer.

The protein resides in the cytoplasm. The catalysed reaction is UMP + ATP = UDP + ADP. The protein operates within pyrimidine metabolism; CTP biosynthesis via de novo pathway; UDP from UMP (UMPK route): step 1/1. With respect to regulation, allosterically activated by GTP. Inhibited by UTP. Its function is as follows. Catalyzes the reversible phosphorylation of UMP to UDP. In Clostridium tetani (strain Massachusetts / E88), this protein is Uridylate kinase.